The primary structure comprises 237 residues: Uridylate kinase (237 aa).

Residue 12 to 15 coordinates ATP; the sequence is KLSG. The tract at residues 20–25 is involved in allosteric activation by GTP; the sequence is GENGFG. UMP is bound at residue glycine 54. The ATP site is built by glycine 55 and arginine 59. Residues aspartate 72 and 133–140 each bind UMP; that span reads TGNPYFST. Residues tyrosine 166 and aspartate 169 each coordinate ATP.

It belongs to the UMP kinase family. In terms of assembly, homohexamer.

The protein localises to the cytoplasm. It catalyses the reaction UMP + ATP = UDP + ADP. The protein operates within pyrimidine metabolism; CTP biosynthesis via de novo pathway; UDP from UMP (UMPK route): step 1/1. Allosterically activated by GTP. Inhibited by UTP. Its function is as follows. Catalyzes the reversible phosphorylation of UMP to UDP. The chain is Uridylate kinase from Clostridium perfringens (strain SM101 / Type A).